The chain runs to 609 residues: Spore coat protein homolog 1 (609 aa).

The first 17 residues, 1 to 17 (MKSLLFVVFIFLTTTYA), serve as a signal peptide directing secretion. N-linked (GlcNAc...) asparagine glycosylation is found at N82, N397, and N440. The segment at 527 to 547 (TVTQVPEAPGTDGTPSESTAW) is disordered. A lipid anchor (GPI-anchor amidated serine) is attached at S584. A propeptide spans 585-609 (SSSIKRTPCILPLVILASTLFASFF) (removed in mature form).

Its subcellular location is the cell membrane. Functionally, may play a role in cell adhesion. The protein is Spore coat protein homolog 1 of Rhizopus delemar (strain RA 99-880 / ATCC MYA-4621 / FGSC 9543 / NRRL 43880) (Mucormycosis agent).